Reading from the N-terminus, the 526-residue chain is MLO-like protein 1 (526 aa).

Topologically, residues 1–11 (MGHGGEGMSLE) are extracellular. The chain crosses the membrane as a helical span at residues 12–32 (FTPTWVVAGVCTVIVAISLAV). Topologically, residues 33–61 (ERLLHYFGTVLKKKKQKPLYEALQKVKEE) are cytoplasmic. The helical transmembrane segment at 62 to 82 (LMLLGFISLLLTVFQGLISKF) threads the bilayer. Residues 83–160 (CVKENVLMHM…LSLEALHHLH (78 aa)) are Extracellular-facing. A helical membrane pass occupies residues 161–181 (IFIFVLAISHVTFCVLTVIFG). The Cytoplasmic portion of the chain corresponds to 182–287 (STRIHQWKKW…MRALEDDFKQ (106 aa)). Helical transmembrane passes span 288–308 (VVGISWYLWIFVVIFLLLNVN) and 309–329 (GWHTYFWIAFIPFALLLAVGT). Over 330-372 (KLEHVIAQLAHEVAEKHVAIEGDLVVKPSDEHFWFSKPQIVLY) the chain is Cytoplasmic. A helical membrane pass occupies residues 373–393 (LIHFILFQNAFEIAFFFWIWV). Topologically, residues 394–412 (TYGFDSCIMGQVRYIVPRL) are extracellular. A helical membrane pass occupies residues 413–433 (VIGVFIQVLCSYSTLPLYAIV). The Cytoplasmic segment spans residues 434–526 (SQMGSSFKKA…NNEITPDHNN (93 aa)). Residues 447–468 (ENVQVGLVGWAQKVKQKRDLKA) are calmodulin-binding. A disordered region spans residues 471–526 (SNGDEGSSQAGPGPDSGSGSAPAAGPGAGFAGIQLSRVTRNNAGDTNNEITPDHNN). Residues 476–495 (GSSQAGPGPDSGSGSAPAAG) are compositionally biased toward low complexity. Polar residues predominate over residues 506 to 520 (SRVTRNNAGDTNNEI).

It belongs to the MLO family.

It is found in the cell membrane. May be involved in modulation of pathogen defense and leaf cell death. Activity seems to be regulated by Ca(2+)-dependent calmodulin binding and seems not to require heterotrimeric G proteins. This chain is MLO-like protein 1 (MLO1), found in Arabidopsis thaliana (Mouse-ear cress).